Reading from the N-terminus, the 191-residue chain is Molybdenum cofactor guanylyltransferase (191 aa).

Residues 11–13 (LCG), Lys23, Asp66, and Asp97 each bind GTP. Asp97 contributes to the Mg(2+) binding site.

The protein belongs to the MobA family. In terms of assembly, monomer. It depends on Mg(2+) as a cofactor.

Its subcellular location is the cytoplasm. It carries out the reaction Mo-molybdopterin + GTP + H(+) = Mo-molybdopterin guanine dinucleotide + diphosphate. Transfers a GMP moiety from GTP to Mo-molybdopterin (Mo-MPT) cofactor (Moco or molybdenum cofactor) to form Mo-molybdopterin guanine dinucleotide (Mo-MGD) cofactor. The sequence is that of Molybdenum cofactor guanylyltransferase from Campylobacter jejuni subsp. doylei (strain ATCC BAA-1458 / RM4099 / 269.97).